We begin with the raw amino-acid sequence, 263 residues long: Transcription factor bHLH27 (263 aa).

Low complexity predominate over residues 32–47; it reads EAFSGSGESSSPDGAA. The tract at residues 32 to 61 is disordered; that stretch reads EAFSGSGESSSPDGAATSPASSKNVVSERN. Over residues 49 to 58 the composition is skewed to polar residues; sequence SPASSKNVVS. A bHLH domain is found at 50–99; that stretch reads PASSKNVVSERNRRQKLNQRLFALRSVVPNISKLDKASVIKDSIDYMQEL.

Homodimer. In terms of tissue distribution, expressed constitutively in roots, leaves, stems, and flowers.

It localises to the nucleus. The polypeptide is Transcription factor bHLH27 (BHLH27) (Arabidopsis thaliana (Mouse-ear cress)).